The primary structure comprises 157 residues: SUMO-conjugating enzyme UBC9-B (157 aa).

In terms of domain architecture, UBC core spans 4–157; it reads IALSRLAQER…VRAQAKKFSP (154 aa). Residues 13–18 are interaction with SUMO1; sequence RKAWRK. The Glycyl thioester intermediate role is filled by Cys-93.

The protein belongs to the ubiquitin-conjugating enzyme family. As to quaternary structure, forms a tight complex with rangap1 and ranbp2. Interacts with vsx1.

It is found in the nucleus. The protein operates within protein modification; protein sumoylation. Its function is as follows. Accepts the ubiquitin-like proteins sumo1, sumo2 and sumo3 from the uble1a-uble1b E1 complex and catalyzes their covalent attachment to other proteins with the help of an E3 ligase such as ranbp2 or cbx4. Essential for nuclear architecture and chromosome segregation. Mediates nuclear localization of vsx1. Required for progression through mitosis during organogenesis. This is SUMO-conjugating enzyme UBC9-B (ube2ib) from Danio rerio (Zebrafish).